The primary structure comprises 462 residues: ATP synthase subunit beta (462 aa).

ATP is bound at residue 151–158 (GGAGVGKT).

This sequence belongs to the ATPase alpha/beta chains family. In terms of assembly, F-type ATPases have 2 components, CF(1) - the catalytic core - and CF(0) - the membrane proton channel. CF(1) has five subunits: alpha(3), beta(3), gamma(1), delta(1), epsilon(1). CF(0) has four main subunits: a(1), b(1), b'(1) and c(9-12).

The protein localises to the cell inner membrane. It carries out the reaction ATP + H2O + 4 H(+)(in) = ADP + phosphate + 5 H(+)(out). In terms of biological role, produces ATP from ADP in the presence of a proton gradient across the membrane. The catalytic sites are hosted primarily by the beta subunits. In Chlorobium phaeovibrioides (strain DSM 265 / 1930) (Prosthecochloris vibrioformis (strain DSM 265)), this protein is ATP synthase subunit beta.